A 354-amino-acid polypeptide reads, in one-letter code: Arginase-2, mitochondrial (354 aa).

A mitochondrion-targeting transit peptide spans 1-22; sequence MFLRSSASRLLHGQIPCVLTRS. The Mn(2+) site is built by His120, Asp143, His145, and Asp147. Substrate is bound by residues 145–149, 156–158, and Glu202; these read HADIN and SGN. The Mn(2+) site is built by Asp251 and Asp253. The substrate site is built by Thr265 and Glu296.

This sequence belongs to the arginase family. In terms of assembly, homotrimer. Requires Mn(2+) as cofactor.

It localises to the mitochondrion. The catalysed reaction is L-arginine + H2O = urea + L-ornithine. Its pathway is nitrogen metabolism; urea cycle; L-ornithine and urea from L-arginine: step 1/1. Its function is as follows. May play a role in the regulation of extra-urea cycle arginine metabolism and also in down-regulation of nitric oxide synthesis. Extrahepatic arginase functions to regulate L-arginine bioavailability to nitric oxid synthase (NOS). Arginine metabolism is a critical regulator of innate and adaptive immune responses. Seems to be involved in negative regulation of the survival capacity of activated CD4(+) and CD8(+) T cells. May suppress inflammation-related signaling in asthmatic airway epithelium. May contribute to the immune evasion of H.pylori by restricting M1 macrophage activation and polyamine metabolism. May play a role in promoting prenatal immune suppression. Regulates RPS6KB1 signaling, which promotes endothelial cell senescence and inflammation and implicates NOS3/eNOS dysfunction. Can inhibit endothelial autophagy independently of its enzymatic activity implicating mTORC2 signaling. Involved in vascular smooth muscle cell senescence and apoptosis independently of its enzymatic activity. The sequence is that of Arginase-2, mitochondrial (Arg2) from Mus musculus (Mouse).